Consider the following 416-residue polypeptide: PTS system N-acetylglucosamine-specific EIIC component (416 aa).

One can recognise a PTS EIIC type-1 domain in the interval 16–406 (SGLFQGLQKV…FNLKTPGREP (391 aa)). 10 consecutive transmembrane segments (helical) span residues 68-88 (AGGALTGSLPILFCIGVAIGF), 96-116 (TALAAVVGFLVYSKVLEAFPV), 130-150 (TYNDPGVLGGIIMGLLAAVLW), 170-190 (LVPIIMAFVGIVVGVFFGLVW), 196-216 (GISNFGEWMTGLGSGGAALFG), 266-286 (IFQAGFFPIMMFGLPAAALAM), 298-318 (VLGMMISLAATSFVTGVTEPI), 323-343 (MFIAPVLYVLHAVLTAISMAI), 344-364 (TWGLGVHAGFNFSAGFIDYAL), and 375-395 (IIPIGLVFAAIYYVTFRFAIV).

It is found in the cell membrane. In terms of biological role, the phosphoenolpyruvate-dependent sugar phosphotransferase system (sugar PTS), a major carbohydrate active transport system, catalyzes the phosphorylation of incoming sugar substrates concomitantly with their translocation across the cell membrane. This system is involved in N-acetylglucosamine (GlcNAc) transport. High-affinity permease, which exhibits a narrow specificity for GlcNAc. Essential for C-signaling between vegetative growth and development. The sequence is that of PTS system N-acetylglucosamine-specific EIIC component from Streptomyces coelicolor (strain ATCC BAA-471 / A3(2) / M145).